The primary structure comprises 174 residues: ATP synthase subunit d, mitochondrial (174 aa).

Ser2 carries the N-acetylserine modification.

Belongs to the ATPase d subunit family.

It is found in the mitochondrion inner membrane. In terms of biological role, mitochondrial membrane ATP synthase (F(1)F(0) ATP synthase or Complex V) produces ATP from ADP in the presence of a proton gradient across the membrane which is generated by electron transport complexes of the respiratory chain. F-type ATPases consist of two structural domains, F(1) - containing the extramembraneous catalytic core, and F(0) - containing the membrane proton channel, linked together by a central stalk and a peripheral stalk. During catalysis, ATP synthesis in the catalytic domain of F(1) is coupled via a rotary mechanism of the central stalk subunits to proton translocation. Part of the complex F(0) domain and the peripheric stalk, which acts as a stator to hold the catalytic alpha(3)beta(3) subcomplex and subunit a/ATP6 static relative to the rotary elements. The sequence is that of ATP synthase subunit d, mitochondrial (ATP7) from Kluyveromyces lactis (strain ATCC 8585 / CBS 2359 / DSM 70799 / NBRC 1267 / NRRL Y-1140 / WM37) (Yeast).